The following is a 165-amino-acid chain: Large ribosomal subunit protein uL11 (165 aa).

It belongs to the universal ribosomal protein uL11 family. In terms of assembly, component of the large ribosomal subunit. Mature ribosomes consist of a small (40S) and a large (60S) subunit. The 40S subunit contains about 32 different proteins and 1 molecule of RNA (18S). The 60S subunit contains 45 different proteins and 3 molecules of RNA (25S, 5.8S and 5S).

The protein localises to the cytoplasm. Component of the ribosome, a large ribonucleoprotein complex responsible for the synthesis of proteins in the cell. The small ribosomal subunit (SSU) binds messenger RNAs (mRNAs) and translates the encoded message by selecting cognate aminoacyl-transfer RNA (tRNA) molecules. The large subunit (LSU) contains the ribosomal catalytic site termed the peptidyl transferase center (PTC), which catalyzes the formation of peptide bonds, thereby polymerizing the amino acids delivered by tRNAs into a polypeptide chain. The nascent polypeptides leave the ribosome through a tunnel in the LSU and interact with protein factors that function in enzymatic processing, targeting, and the membrane insertion of nascent chains at the exit of the ribosomal tunnel. The protein is Large ribosomal subunit protein uL11 (RPL12) of Candida albicans (strain SC5314 / ATCC MYA-2876) (Yeast).